The sequence spans 509 residues: Citrinin biosynthesis transcriptional activator mrl3 (509 aa).

Residues 1–22 (MASTAHRQPSRPTTRQRQRTGR) are disordered. The segment at residues 24–51 (CEECRRRKLRCDGQQPRCGVCVDSGVTC) is a DNA-binding region (zn(2)-C6 fungal-type). The interval 97–143 (STPLTNDHHDGCSVSSASSRSDSNPPPTVSEPDMSLPNTTTSVSSAP) is disordered. Positions 109-119 (SVSSASSRSDS) are enriched in low complexity. A compositionally biased stretch (polar residues) spans 132 to 143 (LPNTTTSVSSAP).

It is found in the nucleus. Transcription factor that regulates the expression of the gene cluster that mediates the biosynthesis of the mycotoxin citrinin, a hepato-nephrotoxic compound to humans due to inhibition of respiration complex III. The polypeptide is Citrinin biosynthesis transcriptional activator mrl3 (Monascus ruber (Mold)).